Here is a 478-residue protein sequence, read N- to C-terminus: Alpha-1,3-mannosyl-glycoprotein 4-beta-N-acetylglucosaminyltransferase C (478 aa).

Topologically, residues 1–23 (MFKFHQVKHIFEILDKMRCLRKR) are cytoplasmic. The helical; Signal-anchor for type II membrane protein transmembrane segment at 24-44 (FTVSFLGVLVIFLLFMNLYIE) threads the bilayer. The Lumenal portion of the chain corresponds to 45–478 (DSYVLEGDKQ…IIRSISIWTS (434 aa)). N-linked (GlcNAc...) asparagine glycosylation is found at Asn-84, Asn-215, and Asn-348.

It belongs to the glycosyltransferase 54 family. Requires a divalent metal cation as cofactor.

The protein localises to the golgi apparatus membrane. It catalyses the reaction N(4)-{beta-D-GlcNAc-(1-&gt;2)-alpha-D-Man-(1-&gt;3)-[beta-D-GlcNAc-(1-&gt;2)-alpha-D-Man-(1-&gt;6)]-beta-D-Man-(1-&gt;4)-beta-D-GlcNAc-(1-&gt;4)-beta-D-GlcNAc}-L-asparaginyl-[protein] + UDP-N-acetyl-alpha-D-glucosamine = N(4)-{beta-D-GlcNAc-(1-&gt;2)-[beta-D-GlcNAc-(1-&gt;4)]-alpha-D-Man-(1-&gt;3)-[beta-D-GlcNAc-(1-&gt;2)-alpha-D-Man-(1-&gt;6)]-beta-D-Man-(1-&gt;4)-beta-D-GlcNAc-(1-&gt;4)-beta-D-GlcNAc}-L-asparaginyl-[protein] + UDP + H(+). It functions in the pathway protein modification; protein glycosylation. Its function is as follows. Glycosyltransferase that participates in the transfer of N-acetylglucosamine (GlcNAc) to the core mannose residues of N-linked glycans. Catalyzes the formation of the GlcNAcbeta1-4 branch on the GlcNAcbeta1-2Manalpha1-3 arm of the core structure of N-linked glycans. Essential for the production of tri- and tetra-antennary N-linked sugar chains. Does not catalyze the transfer of GlcNAc to the Manalpha1-6 arm to form GlcNAcBeta1-4Manalpha1-6 linkage ('GnT-VI' activity). The chain is Alpha-1,3-mannosyl-glycoprotein 4-beta-N-acetylglucosaminyltransferase C (MGAT4C) from Sus scrofa (Pig).